Consider the following 203-residue polypeptide: MTRKTRIQTIESAEPEVDENGYDRPSKSQLKREMHELQELGAALIALPKDALKRMPMPEKLDDAVREARRITDHEGKRRQVQYVGRVMRSLLDEETAALRTALDTYNGVNKAETAKLHWIERTREKLLADDAALTDFIRQHPNADPQQGRTLIRNARKEAQQSKPPRYFRELFQWIKNADGPPAQTDSEADDAQDDEDDDRDA.

Disordered stretches follow at residues 1–31 and 178–203; these read MTRK…SQLK and NADG…DRDA. The span at 21-31 shows a compositional bias: basic and acidic residues; it reads GYDRPSKSQLK. The segment covering 188–203 has biased composition (acidic residues); it reads SEADDAQDDEDDDRDA.

Belongs to the DarP family.

Its subcellular location is the cytoplasm. Its function is as follows. Member of a network of 50S ribosomal subunit biogenesis factors which assembles along the 30S-50S interface, preventing incorrect 23S rRNA structures from forming. Promotes peptidyl transferase center (PTC) maturation. The polypeptide is Dual-action ribosomal maturation protein DarP (Paraburkholderia xenovorans (strain LB400)).